Here is a 426-residue protein sequence, read N- to C-terminus: MSNLTPIATYNLALQPFQPVPAIEDDFPISIRITLASLDPEAADDKAEPSSLRILKKSNSLLSDDYFEDDDDDEEEDDEEDELDDEEEEEEAEEEKSSKKSNGKKSSKKDEDEEEDDEEEDDEDNDEDDVSEYIVCTLSPKHQYQQTLDLTITPDEEVYFVVTGSYPIHLTGNYIEHPADQDEEDYDNEDEDYDDEYDLSPDEDEIIYGAPLDDEYDDEEESEEEGTPKIEEIVEEKEKVKESPKESKKRVAEESTSKKSKKAKKDEKKSVQFSKELEQGPTGSTLVEKDNKKATPTKDKKETPVKDDGDKKKKFPTKTLLGGVITEDRKIGSGATAKSGAKVGIRYIGKLKNGKVFDKNTSGKPFSFKLGKGECIKGFDLGVTGMAVGGERRVIIPPKMGYGSQALPGIPANSELTFDIKLVSLK.

2 disordered regions span residues 37-143 (SLDP…PKHQ) and 171-314 (TGNY…KKKK). Acidic residues-rich tracts occupy residues 65–94 (DYFE…EAEE), 111–131 (EDEE…DDVS), and 181–225 (QDEE…SEEE). Composition is skewed to basic and acidic residues over residues 226 to 257 (GTPK…ESTS), 264 to 278 (KKDE…KELE), and 287 to 311 (VEKD…DGDK). In terms of domain architecture, PPIase FKBP-type spans 340 to 426 (GAKVGIRYIG…TFDIKLVSLK (87 aa)).

The protein belongs to the FKBP-type PPIase family. FKBP3/4 subfamily.

The protein localises to the nucleus. Its subcellular location is the nucleolus. It catalyses the reaction [protein]-peptidylproline (omega=180) = [protein]-peptidylproline (omega=0). With respect to regulation, inhibited by both FK506 and rapamycin. In terms of biological role, PPIases accelerate the folding of proteins. It catalyzes the cis-trans isomerization of proline imidic peptide bonds in oligopeptides. This is FK506-binding protein 3 (FPR3) from Candida albicans (strain SC5314 / ATCC MYA-2876) (Yeast).